The chain runs to 122 residues: UPF0102 protein CPR_1677 (122 aa).

It belongs to the UPF0102 family.

This Clostridium perfringens (strain SM101 / Type A) protein is UPF0102 protein CPR_1677.